Here is a 205-residue protein sequence, read N- to C-terminus: MATPLGWSKAGSGSVCLALDQLRDVIESQEELIHQLRNVMVLQDENFVSKEEFQAVEKKLVEEKAAHAKTKVLLAKEEEKLQFALGEVEVLSKQLEKEKLAFEKALSSVKSKVLQESSKKDQLITKCNEIESHIIKQEDILNGKENEIKELQQVISQQKQIFRNHMSDFRIQKQQESYMAQVLDQKHKKASGTRQARSHQHPREK.

Residues 17 to 166 are a coiled coil; the sequence is LALDQLRDVI…QQKQIFRNHM (150 aa). A required for interaction with CBX5 and TBPL1 region spans residues 138–185; that stretch reads EDILNGKENEIKELQQVISQQKQIFRNHMSDFRIQKQQESYMAQVLDQ. The interval 180–205 is disordered; sequence AQVLDQKHKKASGTRQARSHQHPREK. Residues 186-205 are compositionally biased toward basic residues; it reads KHKKASGTRQARSHQHPREK.

It belongs to the SPATA24 family. As to quaternary structure, homodimer. Interacts with CBX3, CBX5, GMNN, GTF2B, TBPL1 and the polycomb proteins PHCF2, RNF2 and SCMH1 but not with CBX1 or PCGF2.

Its subcellular location is the cytoplasm. The protein resides in the nucleus. The protein localises to the nucleolus. It is found in the nucleoplasm. In terms of biological role, binds DNA with high affinity but does not bind to TATA boxes. Synergises with GMNN and TBP in activation of TATA box-containing promoters and with GMNN and TBPL1 in activation of the NF1 TATA-less promoter. May play a role in cytoplasm movement and removal during spermiogenesis. This chain is Spermatogenesis-associated protein 24 (SPATA24), found in Homo sapiens (Human).